Consider the following 383-residue polypeptide: Ovalbumin (383 aa).

Gly2 is subject to N-acetylglycine. The not cleaved signal peptide spans 22-48 (HHANDNMLYSPFAILSTLAMVFLGAKD). Ser69 carries the phosphoserine modification. Cys74 and Cys121 are oxidised to a cystine. Residues Asn293 and Asn312 are each glycosylated (N-linked (GlcNAc...) asparagine). Ser345 is modified (phosphoserine).

This sequence belongs to the serpin family. Ov-serpin subfamily. In terms of processing, the signal sequence is not cleaved. The functional signal for membrane translocation of ovalbumin becomes accessible when the nascent chain is 50 to 60 residues long. The hydrophobic sequence which lies between residues 27 and 43 folds back on the preceding residues to form an amphipathic hairpin structure which is the signal element recognized by the membrane. Major protein of egg white.

The protein localises to the secreted. Functionally, storage protein of egg white. Lack protease inhibitory activity. This chain is Ovalbumin (SERPINB14), found in Coturnix japonica (Japanese quail).